Here is an 85-residue protein sequence, read N- to C-terminus: Cell division topological specificity factor (85 aa).

It belongs to the MinE family.

Functionally, prevents the cell division inhibition by proteins MinC and MinD at internal division sites while permitting inhibition at polar sites. This ensures cell division at the proper site by restricting the formation of a division septum at the midpoint of the long axis of the cell. The protein is Cell division topological specificity factor of Shewanella oneidensis (strain ATCC 700550 / JCM 31522 / CIP 106686 / LMG 19005 / NCIMB 14063 / MR-1).